The following is a 173-amino-acid chain: Gamma-crystallin S-1 (173 aa).

2 consecutive Beta/gamma crystallin 'Greek key' domains span residues 2–40 and 41–83; these read GKII…RVES and DWWV…RMLP. Residues 84-88 form a connecting peptide region; it reads HTGRS. Beta/gamma crystallin 'Greek key' domains follow at residues 89–129 and 130–172; these read YRMR…QVMD and GYWI…RRIM.

Belongs to the beta/gamma-crystallin family.

Functionally, crystallins are the dominant structural components of the vertebrate eye lens. The polypeptide is Gamma-crystallin S-1 (GS-1) (Chiloscyllium indicum (Slender bamboo shark)).